The primary structure comprises 880 residues: GRB2-associated and regulator of MAPK protein 2 (880 aa).

A CABIT region spans residues 12–320; the sequence is RWSMGAFPLD…HFLLLTDTPR (309 aa). Disordered stretches follow at residues 385-407, 461-483, 527-548, 569-611, and 633-713; these read PGAVRAPGPPGRLGPALPAPGDS, IVGPPRHEPEAPPPPVPPKSEAV, SSLSYYSSGLQDGAGSRSGSGS, SESS…ADTP, and APFG…ELGQ. 2 stretches are compositionally biased toward low complexity: residues 640-663 and 683-696; these read PFSGPAHPSGAPAASSSGSISTSG and QGYSAAPSSSLSSS. At Ser740 the chain carries Phosphoserine. Residues 813–877 enclose the SAM domain; it reads SALSLEEVSR…KIMQFIKGWR (65 aa).

This sequence belongs to the GAREM family.

Its function is as follows. Probable adapter protein that provides a critical link between cell surface epidermal growth factor receptor and the MAPK/ERK signaling pathway. This is GRB2-associated and regulator of MAPK protein 2 (Garem2) from Mus musculus (Mouse).